Consider the following 135-residue polypeptide: Large ribosomal subunit protein uL16c (135 aa).

This sequence belongs to the universal ribosomal protein uL16 family. As to quaternary structure, part of the 50S ribosomal subunit.

The protein resides in the plastid. It is found in the chloroplast. The sequence is that of Large ribosomal subunit protein uL16c from Gossypium hirsutum (Upland cotton).